The sequence spans 111 residues: Shuttling pre-60S factor C23B6.02c (111 aa).

Basic residues-rich tracts occupy residues 1–12 (MAKKQSIRSRNF) and 59–73 (SKKKKNKKQTSKKAK). 2 disordered regions span residues 1 to 25 (MAKKQSIRSRNFRRSDPAYDLDSST) and 47 to 111 (ALRS…QGDE). A compositionally biased stretch (basic and acidic residues) spans 83–111 (QAREERLDTKISKSLQKQEKLKARKQGDE).

This sequence belongs to the ECM1 family. Associates with the pre-60S ribosomal particle and the nucleopore complex.

It localises to the nucleus. The protein localises to the nucleolus. It is found in the cytoplasm. In terms of biological role, pre-ribosomal factor involved in 60S ribosomal protein subunit export from the nucleus. The protein is Shuttling pre-60S factor C23B6.02c of Schizosaccharomyces pombe (strain 972 / ATCC 24843) (Fission yeast).